The sequence spans 1047 residues: Ribonucleoside-diphosphate reductase subunit alpha (1047 aa).

3 consecutive ATP-cone domains span residues 9-111 (CTIV…KAHR), 118-219 (LSVV…ARVR), and 237-327 (VEVL…EALG). Substrate-binding positions include threonine 442, 457–458 (SC), glycine 486, 670–674 (NLCTE), and 857–861 (PTATI). The cysteines at positions 458 and 687 are disulfide-linked. Asparagine 670 (proton acceptor) is an active-site residue. The active-site Cysteine radical intermediate is cysteine 672. Glutamate 674 serves as the catalytic Proton acceptor.

Belongs to the ribonucleoside diphosphate reductase large chain family. Tetramer of two alpha and two beta subunits.

It catalyses the reaction a 2'-deoxyribonucleoside 5'-diphosphate + [thioredoxin]-disulfide + H2O = a ribonucleoside 5'-diphosphate + [thioredoxin]-dithiol. With respect to regulation, under complex allosteric control mediated by deoxynucleoside triphosphates and ATP binding. The type of nucleotide bound at the specificity site determines substrate preference. It seems probable that ATP makes the enzyme reduce CDP and UDP, dGTP favors ADP reduction and dTTP favors GDP reduction. Provides the precursors necessary for DNA synthesis. Catalyzes the biosynthesis of deoxyribonucleotides from the corresponding ribonucleotides. In Chlamydia trachomatis serovar D (strain ATCC VR-885 / DSM 19411 / UW-3/Cx), this protein is Ribonucleoside-diphosphate reductase subunit alpha (nrdA).